The primary structure comprises 125 residues: Large ribosomal subunit protein bL12 (125 aa).

The protein belongs to the bacterial ribosomal protein bL12 family. As to quaternary structure, homodimer. Part of the ribosomal stalk of the 50S ribosomal subunit. Forms a multimeric L10(L12)X complex, where L10 forms an elongated spine to which 2 to 4 L12 dimers bind in a sequential fashion. Binds GTP-bound translation factors.

Forms part of the ribosomal stalk which helps the ribosome interact with GTP-bound translation factors. Is thus essential for accurate translation. In Cereibacter sphaeroides (strain ATCC 17023 / DSM 158 / JCM 6121 / CCUG 31486 / LMG 2827 / NBRC 12203 / NCIMB 8253 / ATH 2.4.1.) (Rhodobacter sphaeroides), this protein is Large ribosomal subunit protein bL12.